A 1070-amino-acid chain; its full sequence is DNA double-strand break repair Rad50 ATPase (1070 aa).

ATP is bound by residues arginine 12, 32-38 (NGSGKSS), and glutamine 142. Coiled coils occupy residues 227-257 (LEEL…RLQE), 369-403 (ECRT…EKAG), and 449-478 (LREL…KEIR). Residues 508-607 (LENLEDFNEL…KLNRLKEAKK (100 aa)) enclose the Zinc-hook domain. Zn(2+) is bound by residues cysteine 555 and cysteine 558. 2 coiled-coil regions span residues 570-614 (TAEE…QAYD) and 878-908 (LKRL…ADEL). Residue 969–974 (LLSGGE) coordinates ATP.

Belongs to the SMC family. RAD50 subfamily. In terms of assembly, homodimer. Forms a heterotetramer composed of two Mre11 subunits and two Rad50 subunits. It depends on Zn(2+) as a cofactor.

Part of the Rad50/Mre11 complex, which is involved in the early steps of DNA double-strand break (DSB) repair. The complex may facilitate opening of the processed DNA ends to aid in the recruitment of HerA and NurA. Rad50 controls the balance between DNA end bridging and DNA resection via ATP-dependent structural rearrangements of the Rad50/Mre11 complex. The chain is DNA double-strand break repair Rad50 ATPase from Methanosarcina mazei (strain ATCC BAA-159 / DSM 3647 / Goe1 / Go1 / JCM 11833 / OCM 88) (Methanosarcina frisia).